Reading from the N-terminus, the 212-residue chain is Large ribosomal subunit protein uL3 (212 aa).

The segment at 147-166 is disordered; sequence GSTGQNQSPGKVFKGKKMPG. Gln-153 bears the N5-methylglutamine mark.

The protein belongs to the universal ribosomal protein uL3 family. In terms of assembly, part of the 50S ribosomal subunit. Forms a cluster with proteins L14 and L19. Post-translationally, methylated by PrmB.

One of the primary rRNA binding proteins, it binds directly near the 3'-end of the 23S rRNA, where it nucleates assembly of the 50S subunit. This is Large ribosomal subunit protein uL3 from Psychrobacter sp. (strain PRwf-1).